The primary structure comprises 143 residues: Large-conductance mechanosensitive channel (143 aa).

3 consecutive transmembrane segments (helical) span residues 21–41, 44–64, and 86–106; these read VGVI…ADII, VVGL…LGTV, and GNFI…FMMV.

It belongs to the MscL family. As to quaternary structure, homopentamer.

Its subcellular location is the cell inner membrane. Its function is as follows. Channel that opens in response to stretch forces in the membrane lipid bilayer. May participate in the regulation of osmotic pressure changes within the cell. This Variovorax paradoxus (strain S110) protein is Large-conductance mechanosensitive channel.